The sequence spans 60 residues: Large ribosomal subunit protein uL30 (60 aa).

Belongs to the universal ribosomal protein uL30 family. In terms of assembly, part of the 50S ribosomal subunit.

This Clavibacter michiganensis subsp. michiganensis (strain NCPPB 382) protein is Large ribosomal subunit protein uL30.